We begin with the raw amino-acid sequence, 122 residues long: Small ribosomal subunit protein uS12 (122 aa).

This sequence belongs to the universal ribosomal protein uS12 family. In terms of assembly, part of the 30S ribosomal subunit. Contacts proteins S8 and S17. May interact with IF1 in the 30S initiation complex.

With S4 and S5 plays an important role in translational accuracy. Its function is as follows. Interacts with and stabilizes bases of the 16S rRNA that are involved in tRNA selection in the A site and with the mRNA backbone. Located at the interface of the 30S and 50S subunits, it traverses the body of the 30S subunit contacting proteins on the other side and probably holding the rRNA structure together. The combined cluster of proteins S8, S12 and S17 appears to hold together the shoulder and platform of the 30S subunit. The sequence is that of Small ribosomal subunit protein uS12 from Corynebacterium efficiens (strain DSM 44549 / YS-314 / AJ 12310 / JCM 11189 / NBRC 100395).